We begin with the raw amino-acid sequence, 163 residues long: MSDNPNPVIYVDNENCKSFEDNENSFNSSRYSIEEDQIDEFDEQEIFDLVRSITDPEHPLTLEQLNVVRIENVNINLENSYILLYFTPTVPHCSMANLIGLSIKEKLARSLPKRFKVDVIVTPGSHSSESSVNKQLNDKERVSAALDTSSSILTIVNECIKQN.

The protein belongs to the MIP18 family.

It localises to the nucleus. The protein localises to the cytoplasm. Its subcellular location is the cytoskeleton. The protein resides in the spindle. Component of the cytosolic iron-sulfur (Fe/S) protein assembly machinery. Required for the maturation of extramitochondrial Fe/S proteins. May play a role in chromosome segregation through establishment of sister chromatid cohesion. This is Cytosolic iron-sulfur assembly component 2B from Dictyostelium discoideum (Social amoeba).